A 231-amino-acid polypeptide reads, in one-letter code: Ribonuclease 3 (231 aa).

The 129-residue stretch at 7–135 (IQAIESKLNF…ILGAVYLDGG (129 aa)) folds into the RNase III domain. Position 48 (E48) interacts with Mg(2+). D52 is an active-site residue. Mg(2+)-binding residues include N121 and E124. The active site involves E124. The DRBM domain occupies 160–229 (NPKNRLQQFT…AKQALSTHDN (70 aa)).

This sequence belongs to the ribonuclease III family. Homodimer. Mg(2+) is required as a cofactor.

It is found in the cytoplasm. It catalyses the reaction Endonucleolytic cleavage to 5'-phosphomonoester.. Digests double-stranded RNA. Involved in the processing of primary rRNA transcript to yield the immediate precursors to the large and small rRNAs (23S and 16S). Processes some mRNAs, and tRNAs when they are encoded in the rRNA operon. Processes pre-crRNA and tracrRNA of type II CRISPR loci if present in the organism. The polypeptide is Ribonuclease 3 (Chlamydia trachomatis serovar L2 (strain ATCC VR-902B / DSM 19102 / 434/Bu)).